Reading from the N-terminus, the 116-residue chain is Large ribosomal subunit protein bL19 (116 aa).

It belongs to the bacterial ribosomal protein bL19 family.

This protein is located at the 30S-50S ribosomal subunit interface and may play a role in the structure and function of the aminoacyl-tRNA binding site. The polypeptide is Large ribosomal subunit protein bL19 (Geobacillus sp. (strain WCH70)).